A 292-amino-acid polypeptide reads, in one-letter code: Phosphatidylglycerol--prolipoprotein diacylglyceryl transferase (292 aa).

7 helical membrane-spanning segments follow: residues 25–45 (ITLH…WWYA), 70–90 (FVVW…VLVW), 102–122 (IIAV…IIIA), 138–158 (FDII…CNFI), 193–213 (FMEG…FKAF), 217–237 (GTVS…SEVY), and 255–275 (GFTY…YLLL). Residue Arg153 coordinates a 1,2-diacyl-sn-glycero-3-phospho-(1'-sn-glycerol).

Belongs to the Lgt family.

It is found in the cell inner membrane. The enzyme catalyses L-cysteinyl-[prolipoprotein] + a 1,2-diacyl-sn-glycero-3-phospho-(1'-sn-glycerol) = an S-1,2-diacyl-sn-glyceryl-L-cysteinyl-[prolipoprotein] + sn-glycerol 1-phosphate + H(+). It functions in the pathway protein modification; lipoprotein biosynthesis (diacylglyceryl transfer). In terms of biological role, catalyzes the transfer of the diacylglyceryl group from phosphatidylglycerol to the sulfhydryl group of the N-terminal cysteine of a prolipoprotein, the first step in the formation of mature lipoproteins. This chain is Phosphatidylglycerol--prolipoprotein diacylglyceryl transferase, found in Bartonella tribocorum (strain CIP 105476 / IBS 506).